We begin with the raw amino-acid sequence, 453 residues long: MGLPIVAIVGRPNVGKSTLVNRLTGMMDAIVHDSPGVTRDRTYRPALWNGRDFSLVDTGGLVFDDQTEFLPFIRQQVMIALAEATVVVMVVDGQAGPTPADHEIAHWLRQQDTPVLLAVNKCESPEQGITQAAQFWELSLDEPLPVSGIHGNGTGDLLDQVVEYFSETPESEDEPEIKVALVGRPNVGKSSLLNAFVGENRSIVSPISGTTRDTIDMVVRRGEQTYRFIDTAGIRRKKNVSYGPEFFGINRAFKAIRRSQVVLFVIDALDGVTEQDQKLAGRIIDDGRACVLVVNKWDAVTKDTYTINEFSKQIRSRLNFMEWAEMIFVSAQTGQRVEKILNLVDTAARQFEQRVTTSVINEVLEEAVSWHTPPTTRQGRQGKIYYGTQVSSQPPTIALFVNNPDHFKDNYRRYIERQFRENLDFTGTPIRLLWRGKKLRDVERNTANRATRA.

EngA-type G domains follow at residues 4 to 169 (PIVA…SETP) and 177 to 352 (IKVA…RQFE). GTP-binding positions include 10 to 17 (GRPNVGKS), 57 to 61 (DTGGL), 120 to 123 (NKCE), 183 to 190 (GRPNVGKS), 230 to 234 (DTAGI), and 295 to 298 (NKWD). Residues 353–438 (QRVTTSVINE…PIRLLWRGKK (86 aa)) enclose the KH-like domain.

Belongs to the TRAFAC class TrmE-Era-EngA-EngB-Septin-like GTPase superfamily. EngA (Der) GTPase family. As to quaternary structure, associates with the 50S ribosomal subunit.

Functionally, GTPase that plays an essential role in the late steps of ribosome biogenesis. The sequence is that of GTPase Der from Acaryochloris marina (strain MBIC 11017).